Reading from the N-terminus, the 134-residue chain is Phosphoribosyl-AMP cyclohydrolase (134 aa).

D80 is a Mg(2+) binding site. C81 contributes to the Zn(2+) binding site. Mg(2+) is bound by residues D82 and D84. Residues C98 and C105 each coordinate Zn(2+).

The protein belongs to the PRA-CH family. In terms of assembly, homodimer. It depends on Mg(2+) as a cofactor. Zn(2+) is required as a cofactor.

The protein localises to the cytoplasm. It catalyses the reaction 1-(5-phospho-beta-D-ribosyl)-5'-AMP + H2O = 1-(5-phospho-beta-D-ribosyl)-5-[(5-phospho-beta-D-ribosylamino)methylideneamino]imidazole-4-carboxamide. Its pathway is amino-acid biosynthesis; L-histidine biosynthesis; L-histidine from 5-phospho-alpha-D-ribose 1-diphosphate: step 3/9. Its function is as follows. Catalyzes the hydrolysis of the adenine ring of phosphoribosyl-AMP. The sequence is that of Phosphoribosyl-AMP cyclohydrolase from Bordetella petrii (strain ATCC BAA-461 / DSM 12804 / CCUG 43448).